Reading from the N-terminus, the 515-residue chain is Lysine--tRNA ligase (515 aa).

Glu422 and Glu429 together coordinate Mg(2+).

It belongs to the class-II aminoacyl-tRNA synthetase family. As to quaternary structure, homodimer. Mg(2+) serves as cofactor.

The protein localises to the cytoplasm. The catalysed reaction is tRNA(Lys) + L-lysine + ATP = L-lysyl-tRNA(Lys) + AMP + diphosphate. This is Lysine--tRNA ligase from Clostridium acetobutylicum (strain ATCC 824 / DSM 792 / JCM 1419 / IAM 19013 / LMG 5710 / NBRC 13948 / NRRL B-527 / VKM B-1787 / 2291 / W).